The primary structure comprises 377 residues: Subtilisin-like protease CPC735_012930 (377 aa).

The signal sequence occupies residues 1-20; sequence MSILFKIFASTLAVVSVVNA. A propeptide spanning residues 21–118 is cleaved from the precursor; sequence GELLNFENER…VEPDRMASAT (98 aa). In terms of domain architecture, Inhibitor I9 spans 36–114; it reads SYIVVMKDGT…HVKYVEPDRM (79 aa). The Peptidase S8 domain maps to 128 to 377; sequence SWGLGRISHT…NKLLYNKSGF (250 aa). Catalysis depends on charge relay system residues aspartate 160 and histidine 191. Asparagine 252 carries N-linked (GlcNAc...) asparagine glycosylation. The Charge relay system role is filled by serine 323. 2 N-linked (GlcNAc...) asparagine glycosylation sites follow: asparagine 364 and asparagine 373.

The protein belongs to the peptidase S8 family.

The protein resides in the secreted. Functionally, secreted subtilisin-like serine protease with keratinolytic activity that contributes to pathogenicity. The protein is Subtilisin-like protease CPC735_012930 of Coccidioides posadasii (strain C735) (Valley fever fungus).